Here is a 677-residue protein sequence, read N- to C-terminus: MSHASAAQQIESLRESIRHHEYLYYVQDQPEIDDLAFDELMRKLQRLEAEHPELITPDSPTQRVGGKPKEGFAKVAHSRPMLSLDNVNSEEELRDWERRVREQAGQNAEIEYVCEYKLDGLSMALHYRDGQLARGLTRGDGEIGEDVTTNVRTIRSVPLSIADGKLQQAKMPANFEVRGEVVMPFTAFEKLNEEREAQGLAPAANPRNAAAGTIRTLEPNIVAQRRLDFYAYFALTEKGEDAFGEQEEALDALATLGFRVNQHRHAAKSIETVVEFVNRAEEHRSRLGYEIDGVVVKVNSAVLQRRLGYTGRAPRWAVAYKFAARSGVTQVEDIQVQVGRTGKLTPVAWLAPVQVGGTTVTRATLHNADEIERLGLRIGDFVRIERGGDVIPKVVEVVDDAEHPRGTKHFHFPHACPACGSEVVRTPGEADYRCVNTDCPARLRESLLHFASRGVMNIEGMGEAIVMQLLGRGLVKTVSDIYSLTEEQLVSLERMGKKSATALLGEIDKSRQAPLDRVLFGLGIRFVGERTAQALAEEYGSMDALMQASREELERVNDVGPRVSEAIREFFDEPRNRDLVERLREAGLRFTGEKRKKTSQLAGLTFVLTGTLPGLSRDEAKGKIENAGGHVSGSVSKKTNYVVAGADAGSKLEKANSLGVPVIDEAALIKMLETEQA.

NAD(+) is bound by residues 34–38, 83–84, and E115; these read DLAFD and SL. The N6-AMP-lysine intermediate role is filled by K117. R138, E180, K297, and K321 together coordinate NAD(+). Residues C416, C419, C434, and C439 each contribute to the Zn(2+) site. The region spanning 596-677 is the BRCT domain; the sequence is KKTSQLAGLT…LIKMLETEQA (82 aa).

Belongs to the NAD-dependent DNA ligase family. LigA subfamily. Mg(2+) serves as cofactor. Mn(2+) is required as a cofactor.

The catalysed reaction is NAD(+) + (deoxyribonucleotide)n-3'-hydroxyl + 5'-phospho-(deoxyribonucleotide)m = (deoxyribonucleotide)n+m + AMP + beta-nicotinamide D-nucleotide.. Functionally, DNA ligase that catalyzes the formation of phosphodiester linkages between 5'-phosphoryl and 3'-hydroxyl groups in double-stranded DNA using NAD as a coenzyme and as the energy source for the reaction. It is essential for DNA replication and repair of damaged DNA. In Acidobacterium capsulatum (strain ATCC 51196 / DSM 11244 / BCRC 80197 / JCM 7670 / NBRC 15755 / NCIMB 13165 / 161), this protein is DNA ligase.